Reading from the N-terminus, the 120-residue chain is MTGILCFPPFARFFMLLSGCAWLAGVSSGTSLVASAFSDENQLSEFVHVAEIAQIHRNLRGHINSAIIEANDTSEERMQPNNVVGEGKAPSGAQETVAQILVKGMNKVADFLKDLTRSQK.

Positions 1–29 (MTGILCFPPFARFFMLLSGCAWLAGVSSG) are cleaved as a signal peptide. The RxLR-dEER signature appears at 57–77 (RNLRGHINSAIIEANDTSEER). N71 is a glycosylation site (N-linked (GlcNAc...) asparagine).

It belongs to the RxLR effector family.

It is found in the secreted. It localises to the host cytoplasm. The protein resides in the host nucleus. Functionally, secreted effector that does not suppress pattern-triggered immunity (PTI) in plant host. The sequence is that of Secreted RxLR effector protein RXLR-C26 from Plasmopara halstedii (Downy mildew of sunflower).